The chain runs to 128 residues: MDTYNIISLLLVGFIWGGTNPLIKRGSEGVSKVKKDNFLSQIIYEFVYLWTRPSYTIPMLINLSGSVVFFYTLSKVDISLVVPISNSLTFLFTSLMGMLLGEKVLHFKSYLGMIFVLAGVTICVSSKF.

Helical transmembrane passes span 3-23 (TYNI…NPLI), 53-73 (PSYT…FYTL), 80-100 (LVVP…GMLL), and 104-124 (VLHF…TICV).

The protein belongs to the TMEM234 family.

It localises to the membrane. The protein is Transmembrane protein 234 homolog of Dictyostelium discoideum (Social amoeba).